The sequence spans 374 residues: Queuine tRNA-ribosyltransferase (374 aa).

The active-site Proton acceptor is the Asp89. Residues 89-93, Asp143, Gln187, and Gly214 each bind substrate; that span reads DSGGF. Positions 245-251 are RNA binding; sequence GVGKPED. Residue Asp264 is the Nucleophile of the active site. The tract at residues 269-273 is RNA binding; important for wobble base 34 recognition; sequence TRNAR. Residues Cys302, Cys304, Cys307, and His333 each coordinate Zn(2+).

This sequence belongs to the queuine tRNA-ribosyltransferase family. Homodimer. Within each dimer, one monomer is responsible for RNA recognition and catalysis, while the other monomer binds to the replacement base PreQ1. Zn(2+) is required as a cofactor.

The enzyme catalyses 7-aminomethyl-7-carbaguanine + guanosine(34) in tRNA = 7-aminomethyl-7-carbaguanosine(34) in tRNA + guanine. It functions in the pathway tRNA modification; tRNA-queuosine biosynthesis. In terms of biological role, catalyzes the base-exchange of a guanine (G) residue with the queuine precursor 7-aminomethyl-7-deazaguanine (PreQ1) at position 34 (anticodon wobble position) in tRNAs with GU(N) anticodons (tRNA-Asp, -Asn, -His and -Tyr). Catalysis occurs through a double-displacement mechanism. The nucleophile active site attacks the C1' of nucleotide 34 to detach the guanine base from the RNA, forming a covalent enzyme-RNA intermediate. The proton acceptor active site deprotonates the incoming PreQ1, allowing a nucleophilic attack on the C1' of the ribose to form the product. After dissociation, two additional enzymatic reactions on the tRNA convert PreQ1 to queuine (Q), resulting in the hypermodified nucleoside queuosine (7-(((4,5-cis-dihydroxy-2-cyclopenten-1-yl)amino)methyl)-7-deazaguanosine). This chain is Queuine tRNA-ribosyltransferase, found in Psychromonas ingrahamii (strain DSM 17664 / CCUG 51855 / 37).